We begin with the raw amino-acid sequence, 122 residues long: Large ribosomal subunit protein uL18 (122 aa).

This sequence belongs to the universal ribosomal protein uL18 family. In terms of assembly, part of the 50S ribosomal subunit; part of the 5S rRNA/L5/L18/L25 subcomplex. Contacts the 5S and 23S rRNAs.

Functionally, this is one of the proteins that bind and probably mediate the attachment of the 5S RNA into the large ribosomal subunit, where it forms part of the central protuberance. This chain is Large ribosomal subunit protein uL18, found in Desulfatibacillum aliphaticivorans.